Consider the following 101-residue polypeptide: Fructose-bisphosphate aldolase (101 aa).

Catalysis depends on lysine 11, which acts as the Schiff-base intermediate with dihydroxyacetone-P.

It belongs to the class I fructose-bisphosphate aldolase family.

It carries out the reaction beta-D-fructose 1,6-bisphosphate = D-glyceraldehyde 3-phosphate + dihydroxyacetone phosphate. The protein operates within carbohydrate degradation; glycolysis; D-glyceraldehyde 3-phosphate and glycerone phosphate from D-glucose: step 4/4. The polypeptide is Fructose-bisphosphate aldolase (Lymnaea stagnalis (Great pond snail)).